Consider the following 153-residue polypeptide: Endoribonuclease YbeY (153 aa).

Residues histidine 114, histidine 118, and histidine 124 each coordinate Zn(2+).

This sequence belongs to the endoribonuclease YbeY family. It depends on Zn(2+) as a cofactor.

The protein resides in the cytoplasm. In terms of biological role, single strand-specific metallo-endoribonuclease involved in late-stage 70S ribosome quality control and in maturation of the 3' terminus of the 16S rRNA. This Shewanella sp. (strain MR-7) protein is Endoribonuclease YbeY.